The following is a 240-amino-acid chain: Probable septum site-determining protein MinC (240 aa).

The protein belongs to the MinC family. Interacts with MinD and FtsZ.

Functionally, cell division inhibitor that blocks the formation of polar Z ring septums. Rapidly oscillates between the poles of the cell to destabilize FtsZ filaments that have formed before they mature into polar Z rings. Prevents FtsZ polymerization. This Acinetobacter baylyi (strain ATCC 33305 / BD413 / ADP1) protein is Probable septum site-determining protein MinC.